We begin with the raw amino-acid sequence, 172 residues long: Small ribosomal subunit protein uS5 (172 aa).

The S5 DRBM domain occupies 17–80; the sequence is MREKMIAVNR…EEARRKMIKV (64 aa).

Belongs to the universal ribosomal protein uS5 family. As to quaternary structure, part of the 30S ribosomal subunit. Contacts proteins S4 and S8.

Functionally, with S4 and S12 plays an important role in translational accuracy. In terms of biological role, located at the back of the 30S subunit body where it stabilizes the conformation of the head with respect to the body. The polypeptide is Small ribosomal subunit protein uS5 (Janthinobacterium sp. (strain Marseille) (Minibacterium massiliensis)).